A 407-amino-acid chain; its full sequence is Magnesium-protoporphyrin IX monomethyl ester [oxidative] cyclase 1, chloroplastic (407 aa).

Polar residues predominate over residues 1-10 (MQTTLKQQRA). A disordered region spans residues 1-28 (MQTTLKQQRASGRVSARQPFRSAAVARP).

The protein belongs to the AcsF family. Requires Fe cation as cofactor.

The protein resides in the plastid. Its subcellular location is the chloroplast thylakoid membrane. It carries out the reaction Mg-protoporphyrin IX 13-monomethyl ester + 3 NADPH + 3 O2 + 2 H(+) = 3,8-divinyl protochlorophyllide a + 3 NADP(+) + 5 H2O. It participates in porphyrin-containing compound metabolism; chlorophyll biosynthesis. Catalyzes the formation of the isocyclic ring in chlorophyll biosynthesis under oxygen- and copper-deficient conditions. Mediates the cyclase reaction, which results in the formation of divinylprotochlorophyllide (Pchlide) characteristic of all chlorophylls from magnesium-protoporphyrin IX 13-monomethyl ester (MgPMME). This chain is Magnesium-protoporphyrin IX monomethyl ester [oxidative] cyclase 1, chloroplastic (CRD1), found in Chlamydomonas reinhardtii (Chlamydomonas smithii).